The following is an 844-amino-acid chain: Translation initiation factor IF-2 (844 aa).

Basic and acidic residues predominate over residues methionine 1–lysine 11. Disordered regions lie at residues methionine 1 to aspartate 48 and arginine 79 to leucine 249. Over residues threonine 21–glycine 30 the composition is skewed to low complexity. Positions arginine 79–glutamate 161 are enriched in basic and acidic residues. Residues alanine 162 to serine 175 are compositionally biased toward acidic residues. Residues arginine 200–lysine 210 are compositionally biased toward basic residues. The segment covering glycine 211–phenylalanine 237 has biased composition (basic and acidic residues). The tr-type G domain maps to threonine 343–threonine 513. Positions glycine 352–threonine 359 are G1. Residue glycine 352–threonine 359 coordinates GTP. Residues glycine 377–histidine 381 are G2. Residues aspartate 399–glycine 402 form a G3 region. GTP contacts are provided by residues aspartate 399–histidine 403 and asparagine 453–aspartate 456. Residues asparagine 453–aspartate 456 form a G4 region. The interval serine 489 to lysine 491 is G5.

The protein belongs to the TRAFAC class translation factor GTPase superfamily. Classic translation factor GTPase family. IF-2 subfamily.

It localises to the cytoplasm. In terms of biological role, one of the essential components for the initiation of protein synthesis. Protects formylmethionyl-tRNA from spontaneous hydrolysis and promotes its binding to the 30S ribosomal subunits. Also involved in the hydrolysis of GTP during the formation of the 70S ribosomal complex. The polypeptide is Translation initiation factor IF-2 (Haemophilus influenzae (strain 86-028NP)).